The following is a 375-amino-acid chain: Secondary metabolism regulator laeA (375 aa).

A compositionally biased stretch (polar residues) spans 15–26; sequence ASPNRNNYSYQG. Disordered stretches follow at residues 15–37 and 50–75; these read ASPNRNNYSYQGIESYDSGRSRQ and QEPPREPPDNNDPYDGHGGPAGTSHY.

This sequence belongs to the methyltransferase superfamily. LaeA methyltransferase family. Component of the heterotrimeric velvet complex composed of laeA, veA and velB; VeA acting as a bridging protein between laeA and velB.

The protein localises to the nucleus. It carries out the reaction L-methionyl-[protein] + S-adenosyl-L-methionine = S-methyl-L-methionyl-[protein] + S-adenosyl-L-homocysteine. Methyltransferase that performs automethylation. No other methyl-accepting substrate has been identified yet. Component of the velvet transcription factor complex that acts as a global regulator for secondary metabolite gene expression. Controls the expression of the citric acid, demethylkotanin, orlandin, asperrubrol, tensidol B, atromentin and JBIR8 gene clusters. Also represses the expression of genes related to the production of BMS-192548 and aspernigrin A. This Aspergillus niger (strain ATCC 1015 / CBS 113.46 / FGSC A1144 / LSHB Ac4 / NCTC 3858a / NRRL 328 / USDA 3528.7) protein is Secondary metabolism regulator laeA.